Reading from the N-terminus, the 1303-residue chain is DNA-directed RNA polymerase subunit beta (1303 aa).

The protein belongs to the RNA polymerase beta chain family. In terms of assembly, the RNAP catalytic core consists of 2 alpha, 1 beta, 1 beta' and 1 omega subunit. When a sigma factor is associated with the core the holoenzyme is formed, which can initiate transcription.

It carries out the reaction RNA(n) + a ribonucleoside 5'-triphosphate = RNA(n+1) + diphosphate. Functionally, DNA-dependent RNA polymerase catalyzes the transcription of DNA into RNA using the four ribonucleoside triphosphates as substrates. The protein is DNA-directed RNA polymerase subunit beta of Chlorobaculum tepidum (strain ATCC 49652 / DSM 12025 / NBRC 103806 / TLS) (Chlorobium tepidum).